A 74-amino-acid polypeptide reads, in one-letter code: Omega-conotoxin-like PuIIA (74 aa).

An N-terminal signal peptide occupies residues 1–22 (MKLTCVVIVAVLFLTACQLITA). A propeptide spanning residues 23–46 (ETYSRGEQKHRALSSTDKNSKLTR) is cleaved from the precursor. Cystine bridges form between C48–C62, C55–C66, and C61–C73.

The protein belongs to the conotoxin O1 superfamily. Expressed by the venom duct.

The protein localises to the secreted. Its function is as follows. Omega-conotoxins act at presynaptic membranes, they bind and block voltage-gated calcium channels (Cav). The chain is Omega-conotoxin-like PuIIA from Conus pulicarius (Flea-bitten cone).